Consider the following 125-residue polypeptide: Fluoride-specific ion channel FluC (125 aa).

The next 4 helical transmembrane spans lie at 4–24 (IALV…VGVW), 35–55 (WGTL…VELV), 68–88 (FLVT…LDAV), and 100–120 (AFYI…GLAL). Gly75 and Thr78 together coordinate Na(+).

This sequence belongs to the fluoride channel Fluc/FEX (TC 1.A.43) family.

Its subcellular location is the cell inner membrane. The catalysed reaction is fluoride(in) = fluoride(out). Na(+) is not transported, but it plays an essential structural role and its presence is essential for fluoride channel function. Its function is as follows. Fluoride-specific ion channel. Important for reducing fluoride concentration in the cell, thus reducing its toxicity. This Agrobacterium fabrum (strain C58 / ATCC 33970) (Agrobacterium tumefaciens (strain C58)) protein is Fluoride-specific ion channel FluC.